A 425-amino-acid polypeptide reads, in one-letter code: Glucose-6-phosphate 1-dehydrogenase (425 aa).

Residues arginine 44 and lysine 135 each coordinate NADP(+). The substrate site is built by histidine 165, lysine 169, glutamate 201, and aspartate 220. Catalysis depends on histidine 225, which acts as the Proton acceptor. Lysine 311 is a substrate binding site.

The protein belongs to the glucose-6-phosphate dehydrogenase family.

It catalyses the reaction D-glucose 6-phosphate + NADP(+) = 6-phospho-D-glucono-1,5-lactone + NADPH + H(+). The protein operates within carbohydrate degradation; pentose phosphate pathway; D-ribulose 5-phosphate from D-glucose 6-phosphate (oxidative stage): step 1/3. Its function is as follows. Catalyzes the oxidation of glucose 6-phosphate to 6-phosphogluconolactone. This Helicobacter pylori (strain ATCC 700392 / 26695) (Campylobacter pylori) protein is Glucose-6-phosphate 1-dehydrogenase.